An 859-amino-acid chain; its full sequence is DNA mismatch repair protein MutS (859 aa).

622-629 (GPNMGGKS) contributes to the ATP binding site.

It belongs to the DNA mismatch repair MutS family.

Functionally, this protein is involved in the repair of mismatches in DNA. It is possible that it carries out the mismatch recognition step. This protein has a weak ATPase activity. This Syntrophomonas wolfei subsp. wolfei (strain DSM 2245B / Goettingen) protein is DNA mismatch repair protein MutS.